The chain runs to 393 residues: NAD(P)H-quinone oxidoreductase subunit H, chloroplastic (393 aa).

This sequence belongs to the complex I 49 kDa subunit family. As to quaternary structure, NDH is composed of at least 16 different subunits, 5 of which are encoded in the nucleus.

It is found in the plastid. The protein resides in the chloroplast thylakoid membrane. It carries out the reaction a plastoquinone + NADH + (n+1) H(+)(in) = a plastoquinol + NAD(+) + n H(+)(out). The catalysed reaction is a plastoquinone + NADPH + (n+1) H(+)(in) = a plastoquinol + NADP(+) + n H(+)(out). Its function is as follows. NDH shuttles electrons from NAD(P)H:plastoquinone, via FMN and iron-sulfur (Fe-S) centers, to quinones in the photosynthetic chain and possibly in a chloroplast respiratory chain. The immediate electron acceptor for the enzyme in this species is believed to be plastoquinone. Couples the redox reaction to proton translocation, and thus conserves the redox energy in a proton gradient. The chain is NAD(P)H-quinone oxidoreductase subunit H, chloroplastic from Cryptomeria japonica (Japanese cedar).